A 298-amino-acid polypeptide reads, in one-letter code: Glutamyl-Q tRNA(Asp) synthetase (298 aa).

L-glutamate-binding positions include 12–16 (RFAPT) and E48. The short motif at 15 to 25 (PTPSGYLHFGS) is the 'HIGH' region element. The Zn(2+) site is built by C104, C106, Y118, and C122. The L-glutamate site is built by Y175 and R193. The 'KMSKS' region signature appears at 231–235 (KLGKS). Position 234 (K234) interacts with ATP.

It belongs to the class-I aminoacyl-tRNA synthetase family. GluQ subfamily. Requires Zn(2+) as cofactor.

In terms of biological role, catalyzes the tRNA-independent activation of glutamate in presence of ATP and the subsequent transfer of glutamate onto a tRNA(Asp). Glutamate is transferred on the 2-amino-5-(4,5-dihydroxy-2-cyclopenten-1-yl) moiety of the queuosine in the wobble position of the QUC anticodon. The polypeptide is Glutamyl-Q tRNA(Asp) synthetase (Pseudomonas fluorescens (strain ATCC BAA-477 / NRRL B-23932 / Pf-5)).